A 309-amino-acid polypeptide reads, in one-letter code: Zinc transporter ZIP2 (309 aa).

The Extracellular portion of the chain corresponds to 1–8 (MEVLLGVK). A helical membrane pass occupies residues 9–29 (IGCLLALLVLTLGCGLTPIYV). The Cytoplasmic portion of the chain corresponds to 30 to 43 (KWFQMDAATGHHHR). A helical membrane pass occupies residues 44–64 (VLSLLGCTSAGVFLGAGLMHM). Residues 65–103 (TAEALEGIESEIQKFVEQNSTGSKGNSSRDAASSYVEYP) lie on the Extracellular side of the membrane. A helical transmembrane segment spans residues 104-124 (YGELVISLGFFFVFLLESLAL). Topologically, residues 125–164 (QCCHGAAGGSTVQEEEWGGTHAFGFHKHPAVPSPSRGPLR) are cytoplasmic. The chain crosses the membrane as a helical span at residues 165 to 185 (ALVLLLSLSFHSVFEGLAVGL). 2 residues coordinate Zn(2+): H175 and E179. Residues 186–191 (QATVAA) lie on the Extracellular side of the membrane. A helical transmembrane segment spans residues 192-212 (TIQLCVAVLAHKGLVVFSVGL). H202 is a binding site for Zn(2+). Residues 213-225 (RLGKIGTGPRWAT) lie on the Cytoplasmic side of the membrane. The helical transmembrane segment at 226 to 246 (FCILSLALMSPVGLALGLTVA) threads the bilayer. Topologically, residues 247-258 (GGASGQTQGLAQ) are extracellular. The chain crosses the membrane as a helical span at residues 259-279 (AVLEGIAAGTFLYVTFLEILP). A Zn(2+)-binding site is contributed by E276. Residues 280–288 (RELACPEAP) lie on the Cytoplasmic side of the membrane. A helical transmembrane segment spans residues 289-309 (LAKYSCVAAGFAFMALIALWA).

It belongs to the ZIP transporter (TC 2.A.5) family. In terms of tissue distribution, high expression in the liver, skin and ovary.

It localises to the cell membrane. The enzyme catalyses Zn(2+)(in) = Zn(2+)(out). It carries out the reaction Cd(2+)(in) = Cd(2+)(out). Transporter for the divalent cation Zn(2+). Mediates the influx of Zn(2+) into cells from extracellular space. The Zn(2+) uniporter activity is independent of H(+)-driving force, but is modulated by extracellular pH and membrane potential. Transports also other divalent cations Zn(2+), Cd2(+), Cu2(+), Co2(+) in the order of decreasing affinity, respectively. In the skin, aids in the differentiation of keratinocytes in the epidermis. The sequence is that of Zinc transporter ZIP2 (Slc39a2) from Mus musculus (Mouse).